Here is a 163-residue protein sequence, read N- to C-terminus: Putative C-type lectin protein FPV239 (163 aa).

The C-type lectin domain maps to 48-159 (CKEGWVGYNK…CFLPKKWICR (112 aa)). Cystine bridges form between Cys-76/Cys-158 and Cys-137/Cys-150.

The sequence is that of Putative C-type lectin protein FPV239 from Fowlpox virus (strain NVSL) (FPV).